Consider the following 123-residue polypeptide: Seminal vesicle secretory protein 5 (123 aa).

A signal peptide spans Met1–Ser21. The disordered stretch occupies residues Gly50–Lys123. Over residues Ser64–Ser75 the composition is skewed to low complexity. Over residues Thr77–Ser87 the composition is skewed to basic and acidic residues.

Belongs to the SVP2/SVP5/SVP6 family. Testis.

The protein resides in the secreted. Its subcellular location is the extracellular space. The polypeptide is Seminal vesicle secretory protein 5 (Svs5) (Rattus norvegicus (Rat)).